We begin with the raw amino-acid sequence, 370 residues long: Putrescine-binding periplasmic protein PotF (370 aa).

A signal peptide spans 1–26 (MTALNKKWLSGLVAGALMAVSVGTLA). Position 38 (serine 38) interacts with putrescine. Cysteine 175 and cysteine 239 are disulfide-bonded. The putrescine site is built by aspartate 247 and aspartate 278.

This sequence belongs to the bacterial solute-binding protein PotD/PotF family. In terms of assembly, the complex is composed of two ATP-binding proteins (PotG), two transmembrane proteins (PotH and PotI) and a solute-binding protein (PotF).

The protein resides in the periplasm. Transport is feedback inhibited by intracellular polyamines. Part of the ABC transporter complex PotFGHI involved in putrescine uptake. Binds putrescine. Imports putrescine for maintenance of the optimal concentration of polyamines necessary for cell growth in the presence of glucose. This Escherichia coli (strain K12) protein is Putrescine-binding periplasmic protein PotF.